The following is a 118-amino-acid chain: Basic phospholipase A2 PA-13 (118 aa).

7 cysteine pairs are disulfide-bonded: cysteine 11/cysteine 71, cysteine 27/cysteine 117, cysteine 29/cysteine 45, cysteine 44/cysteine 98, cysteine 51/cysteine 91, cysteine 60/cysteine 84, and cysteine 78/cysteine 89. Ca(2+)-binding residues include tyrosine 28, glycine 30, and glycine 32. Histidine 48 is an active-site residue. Aspartate 49 provides a ligand contact to Ca(2+). Aspartate 92 is an active-site residue.

It belongs to the phospholipase A2 family. Group I subfamily. D49 sub-subfamily. Requires Ca(2+) as cofactor. As to expression, expressed by the venom gland.

Its subcellular location is the secreted. The catalysed reaction is a 1,2-diacyl-sn-glycero-3-phosphocholine + H2O = a 1-acyl-sn-glycero-3-phosphocholine + a fatty acid + H(+). PLA2 catalyzes the calcium-dependent hydrolysis of the 2-acyl groups in 3-sn-phosphoglycerides. The polypeptide is Basic phospholipase A2 PA-13 (Pseudechis australis (Mulga snake)).